The sequence spans 356 residues: DNA polymerase IV (356 aa).

Residues 6 to 187 enclose the UmuC domain; the sequence is IIHVDMDYFF…LDIGDFPGVG (182 aa). Residues aspartate 10 and aspartate 105 each coordinate Mg(2+). Glutamate 106 is an active-site residue.

It belongs to the DNA polymerase type-Y family. As to quaternary structure, monomer. Mg(2+) is required as a cofactor.

It is found in the cytoplasm. The enzyme catalyses DNA(n) + a 2'-deoxyribonucleoside 5'-triphosphate = DNA(n+1) + diphosphate. Poorly processive, error-prone DNA polymerase involved in untargeted mutagenesis. Copies undamaged DNA at stalled replication forks, which arise in vivo from mismatched or misaligned primer ends. These misaligned primers can be extended by PolIV. Exhibits no 3'-5' exonuclease (proofreading) activity. May be involved in translesional synthesis, in conjunction with the beta clamp from PolIII. This Staphylococcus saprophyticus subsp. saprophyticus (strain ATCC 15305 / DSM 20229 / NCIMB 8711 / NCTC 7292 / S-41) protein is DNA polymerase IV.